The following is a 245-amino-acid chain: 2,3-bisphosphoglycerate-dependent phosphoglycerate mutase (245 aa).

Substrate-binding positions include 8-15, 21-22, arginine 60, 87-90, lysine 98, 114-115, and 183-184; these read RHGQSLWN, TG, ERHY, RR, and GN. Catalysis depends on histidine 9, which acts as the Tele-phosphohistidine intermediate. Glutamate 87 functions as the Proton donor/acceptor in the catalytic mechanism.

It belongs to the phosphoglycerate mutase family. BPG-dependent PGAM subfamily.

The enzyme catalyses (2R)-2-phosphoglycerate = (2R)-3-phosphoglycerate. The protein operates within carbohydrate degradation; glycolysis; pyruvate from D-glyceraldehyde 3-phosphate: step 3/5. Its function is as follows. Catalyzes the interconversion of 2-phosphoglycerate and 3-phosphoglycerate. This chain is 2,3-bisphosphoglycerate-dependent phosphoglycerate mutase, found in Bacillus cereus (strain G9842).